The primary structure comprises 57 residues: NADH dehydrogenase [ubiquinone] 1 beta subcomplex subunit 1 (57 aa).

A helical membrane pass occupies residues 10 to 26 (HWVHILVPAGFVFGCYL).

Belongs to the complex I NDUFB1 subunit family. In terms of assembly, complex I is composed of 45 different subunits.

The protein localises to the mitochondrion inner membrane. Accessory subunit of the mitochondrial membrane respiratory chain NADH dehydrogenase (Complex I) that is believed not to be involved in catalysis. Complex I functions in the transfer of electrons from NADH to the respiratory chain. The immediate electron acceptor for the enzyme is believed to be ubiquinone. The protein is NADH dehydrogenase [ubiquinone] 1 beta subcomplex subunit 1 (Ndufb1) of Mus musculus (Mouse).